Here is a 179-residue protein sequence, read N- to C-terminus: Transcription factor BOA15 (179 aa).

It localises to the nucleus. Functionally, transcription factor that probably coregulates the gene clusters that mediates the biosynthesis of botcinin acid and its botcinin derivatives, acetate-derived polyketides that contribute to virulence when combined with the sesquiterpene botrydial. Botcinin acid and its derivatives have been shown to induce chlorosis and necrosis during host plant infection, but also have antifungal activities. The polypeptide is Transcription factor BOA15 (Botryotinia fuckeliana (strain B05.10) (Noble rot fungus)).